The primary structure comprises 405 residues: Arginine biosynthesis bifunctional protein ArgJ (405 aa).

6 residues coordinate substrate: Thr152, Lys178, Thr189, Glu276, Asn400, and Thr405. Catalysis depends on Thr189, which acts as the Nucleophile.

Belongs to the ArgJ family. In terms of assembly, heterotetramer of two alpha and two beta chains.

It is found in the cytoplasm. The enzyme catalyses N(2)-acetyl-L-ornithine + L-glutamate = N-acetyl-L-glutamate + L-ornithine. It carries out the reaction L-glutamate + acetyl-CoA = N-acetyl-L-glutamate + CoA + H(+). It participates in amino-acid biosynthesis; L-arginine biosynthesis; L-ornithine and N-acetyl-L-glutamate from L-glutamate and N(2)-acetyl-L-ornithine (cyclic): step 1/1. The protein operates within amino-acid biosynthesis; L-arginine biosynthesis; N(2)-acetyl-L-ornithine from L-glutamate: step 1/4. Its function is as follows. Catalyzes two activities which are involved in the cyclic version of arginine biosynthesis: the synthesis of N-acetylglutamate from glutamate and acetyl-CoA as the acetyl donor, and of ornithine by transacetylation between N(2)-acetylornithine and glutamate. This is Arginine biosynthesis bifunctional protein ArgJ from Pseudomonas fluorescens (strain Pf0-1).